We begin with the raw amino-acid sequence, 376 residues long: Polycomb group protein FIE1 (376 aa).

WD repeat units lie at residues 85 to 127 (DKDE…LLKT), 130 to 170 (GHGD…CILI), 176 to 216 (GHRN…PYVE), 242 to 279 (VHSN…QSPG), 291 to 332 (VPEC…PVLT), and 339 to 376 (QCKS…HPKA).

Belongs to the WD repeat ESC family. As to quaternary structure, interacts with EZ1. Component of the polycomb repressive complex 2 (PRC2), composed of the core PRC2 components EMF2B, EZ1 and CLF. PRC2 methylates 'Lys-27' residues of histone H3 (H3K27me3), leading to transcriptional repression of the affected target gene. In terms of tissue distribution, widely expressed.

Its function is as follows. Polycomb group (PcG) protein. PcG proteins act by forming multiprotein complexes, which are required to maintain the transcriptionally repressive state of homeotic genes throughout development. PcG proteins are not required to initiate repression, but to maintain it during later stages of development. They act via the methylation of histones, rendering chromatin heritably changed in its expressibility. Involved in the regulation of seed endosperm development, grain filling and seed dormancy. FIE2-containing PcG complex in seed endosperm regulates the expression of various transcription factors by trimethylation on histone H3 'Lys-27' (H3K27me3) of target genes. Involved in the overall expression regulation of a large number of nutrient metabolism genes. Involved in the regulation of seed endosperm development. Involved in the regulation of vegetative development, particularly in stem cell maintenance in the root system, where it maintains the suppression of key differentiation regulators. This chain is Polycomb group protein FIE1, found in Oryza sativa subsp. japonica (Rice).